The primary structure comprises 224 residues: Ribonuclease 3 (224 aa).

The RNase III domain maps to 4-127 (IEKLEQSLTY…IIGAIHLEAG (124 aa)). Glutamate 40 serves as a coordination point for Mg(2+). Aspartate 44 is an active-site residue. Mg(2+) contacts are provided by aspartate 113 and glutamate 116. Residue glutamate 116 is part of the active site. A DRBM domain is found at 154 to 223 (DYKTKLQEIT…AKIALEKLGA (70 aa)).

Belongs to the ribonuclease III family. Homodimer. Mg(2+) serves as cofactor.

The protein localises to the cytoplasm. It catalyses the reaction Endonucleolytic cleavage to 5'-phosphomonoester.. Functionally, digests double-stranded RNA. Involved in the processing of primary rRNA transcript to yield the immediate precursors to the large and small rRNAs (23S and 16S). Processes some mRNAs, and tRNAs when they are encoded in the rRNA operon. Processes pre-crRNA and tracrRNA of type II CRISPR loci if present in the organism. This chain is Ribonuclease 3, found in Campylobacter jejuni subsp. jejuni serotype O:6 (strain 81116 / NCTC 11828).